Consider the following 537-residue polypeptide: Tyrosine-protein kinase Fyn (537 aa).

The N-myristoyl glycine moiety is linked to residue G2. S-palmitoyl cysteine attachment occurs at residues C3 and C6. A disordered region spans residues 14–35 (LTEERDGSLNQSSGYRYGTDPT). S21 and S26 each carry phosphoserine. Positions 82 to 143 (TGVTLFVALY…PSNYVAPVDS (62 aa)) constitute an SH3 domain. Positions 149–246 (WYFGKLGRKD…GLCCRLVVPC (98 aa)) constitute an SH2 domain. Phosphotyrosine is present on Y185. Positions 271–524 (LQLIKRLGNG…YLQGFLEDYF (254 aa)) constitute a Protein kinase domain. ATP contacts are provided by residues 277–285 (LGNGQFGEV) and K299. The active-site Proton acceptor is D390. Y420 is subject to Phosphotyrosine; by autocatalysis. The residue at position 531 (Y531) is a Phosphotyrosine.

This sequence belongs to the protein kinase superfamily. Tyr protein kinase family. SRC subfamily. Interacts (via its SH3 domain) with PIK3R1 and PRMT8. Interacts with FYB1, PAG1, and SH2D1A. Interacts with CD79A (tyrosine-phosphorylated form); the interaction increases FYN activity. Interacts (via SH2 domain) with CSF1R (tyrosine phosphorylated). Interacts with TOM1L1 (phosphorylated form). Interacts with KDR (tyrosine phosphorylated). Interacts (via SH3 domain) with KLHL2 (via N-terminus). Interacts with SH2D1A and SLAMF1. Interacts with ITCH; the interaction phosphorylates ITCH and negatively regulates its activity. Interacts with FASLG. Interacts with RUNX3. Interacts with KIT. Interacts with EPHA8; possible downstream effector of EPHA8 in regulation of cell adhesion. Interacts with PTK2/FAK1; this interaction leads to PTK2/FAK1 phosphorylation and activation. Interacts with CAV1; this interaction couples integrins to the Ras-ERK pathway. Interacts with UNC119. Interacts (via SH2 domain) with PTPRH (phosphorylated form). Interacts with PTPRO (phosphorylated form). Interacts with PTPRB (phosphorylated form). Interacts with FYB2. Interacts with DSCAM. Interacts with SKAP1 and FYB1; this interaction promotes the phosphorylation of CLNK. Interacts with NEDD9; in the presence of PTK2. Mn(2+) is required as a cofactor. Autophosphorylated at Tyr-420. Phosphorylation on the C-terminal tail at Tyr-531 by CSK maintains the enzyme in an inactive state. PTPRC/CD45 dephosphorylates Tyr-531 leading to activation. Dephosphorylation at Tyr-420 by PTPN2 negatively regulates T-cell receptor signaling. Phosphorylated at tyrosine residues, which can be enhanced by NTN1. Post-translationally, palmitoylated. Palmitoylation at Cys-3 and Cys-6, probably by ZDHHC21, regulates subcellular location. Detected in spinal cord oligodendrocytes (at protein level).

Its subcellular location is the cytoplasm. The protein localises to the nucleus. It is found in the cell membrane. It localises to the perikaryon. The catalysed reaction is L-tyrosyl-[protein] + ATP = O-phospho-L-tyrosyl-[protein] + ADP + H(+). With respect to regulation, inhibited by phosphorylation of Tyr-531 by leukocyte common antigen and activated by dephosphorylation of this site. Functionally, non-receptor tyrosine-protein kinase that plays a role in many biological processes including regulation of cell growth and survival, cell adhesion, integrin-mediated signaling, cytoskeletal remodeling, cell motility, immune response and axon guidance. Inactive FYN is phosphorylated on its C-terminal tail within the catalytic domain. Following activation by PKA, the protein subsequently associates with PTK2/FAK1, allowing PTK2/FAK1 phosphorylation, activation and targeting to focal adhesions. Involved in the regulation of cell adhesion and motility through phosphorylation of CTNNB1 (beta-catenin) and CTNND1 (delta-catenin). Regulates cytoskeletal remodeling by phosphorylating several proteins including the actin regulator WAS and the microtubule-associated proteins MAP2 and MAPT. Promotes cell survival by phosphorylating AGAP2/PIKE-A and preventing its apoptotic cleavage. Participates in signal transduction pathways that regulate the integrity of the glomerular slit diaphragm (an essential part of the glomerular filter of the kidney) by phosphorylating several slit diaphragm components including NPHS1, KIRREL1 and TRPC6. Plays a role in neural processes by phosphorylating DPYSL2, a multifunctional adapter protein within the central nervous system, ARHGAP32, a regulator for Rho family GTPases implicated in various neural functions, and SNCA, a small pre-synaptic protein. Involved in reelin signaling by mediating phosphorylation of DAB1 following reelin (RELN)-binding to its receptor. Participates in the downstream signaling pathways that lead to T-cell differentiation and proliferation following T-cell receptor (TCR) stimulation. Phosphorylates PTK2B/PYK2 in response to T-cell receptor activation. Also participates in negative feedback regulation of TCR signaling through phosphorylation of PAG1, thereby promoting interaction between PAG1 and CSK and recruitment of CSK to lipid rafts. CSK maintains LCK and FYN in an inactive form. Promotes CD28-induced phosphorylation of VAV1. In mast cells, phosphorylates CLNK after activation of immunoglobulin epsilon receptor signaling. Can also promote CD244-mediated NK cell activation. In Rattus norvegicus (Rat), this protein is Tyrosine-protein kinase Fyn.